A 63-amino-acid chain; its full sequence is Large ribosomal subunit protein bL28 (63 aa).

Residues 1 to 22 (MSRRCAITGKSAMNGHSVSHAN) are disordered.

This sequence belongs to the bacterial ribosomal protein bL28 family.

The polypeptide is Large ribosomal subunit protein bL28 (Campylobacter hominis (strain ATCC BAA-381 / DSM 21671 / CCUG 45161 / LMG 19568 / NCTC 13146 / CH001A)).